We begin with the raw amino-acid sequence, 135 residues long: Sex-regulated protein janus-A (135 aa).

Lysine 37 contacts substrate. Histidine 63 serves as the catalytic Proton acceptor. 104 to 106 serves as a coordination point for substrate; it reads SQG.

It belongs to the janus family.

Its function is as follows. JanA and janB regulate somatic sex differentiation. The polypeptide is Sex-regulated protein janus-A (janA) (Drosophila erecta (Fruit fly)).